The primary structure comprises 421 residues: Forkhead box protein fkh-3 (421 aa).

A DNA-binding region (fork-head) is located at residues 118 to 218 (RPPISYVALC…SDADFDFFRK (101 aa)).

Its subcellular location is the nucleus. In terms of biological role, transcription factor. Binds to DNA sequence motif 5'-CTGTTTCA-3'. Regulates expression of a class of small RNAs, known as 21U-RNAs, perhaps acting redundantly with fkh-4 and fkh-5. This chain is Forkhead box protein fkh-3, found in Caenorhabditis elegans.